The sequence spans 206 residues: Large ribosomal subunit protein uL4 (206 aa).

Residues M63 to V93 form a disordered region. Basic residues predominate over residues Y64–A77.

The protein belongs to the universal ribosomal protein uL4 family. Part of the 50S ribosomal subunit.

Functionally, one of the primary rRNA binding proteins, this protein initially binds near the 5'-end of the 23S rRNA. It is important during the early stages of 50S assembly. It makes multiple contacts with different domains of the 23S rRNA in the assembled 50S subunit and ribosome. Forms part of the polypeptide exit tunnel. This is Large ribosomal subunit protein uL4 from Sinorhizobium medicae (strain WSM419) (Ensifer medicae).